Here is a 174-residue protein sequence, read N- to C-terminus: Single-stranded DNA-binding protein 1 (174 aa).

The SSB domain maps to 6-111; sequence VNKVILVGNL…VVVNVGGTMQ (106 aa). Residues 55–61 mediate DNA binding; it reads WHRVVLF. The tract at residues 110–174 is disordered; it reads MQMLGGRQGG…PMDFDDDIPF (65 aa). Gly residues predominate over residues 115 to 133; the sequence is GRQGGGAPAGGGQQQGGWG. A compositionally biased stretch (low complexity) spans 134–160; it reads QPQQPQGGNQFSGGAQSRPQQQAPAAP. An Important for interaction with partner proteins motif is present at residues 169-174; it reads DDDIPF.

In terms of assembly, homotetramer. Binds PriA via its C-terminus.

Plays an important role in DNA replication, recombination and repair. Binds to ssDNA and to an array of partner proteins to recruit them to their sites of action during DNA metabolism. Stimulates the ATPase activity of PriA. One tetramer binds to 26 nucleotides (nt) of ssDNA, a 55 nt piece of ssDNA probably binds 2 tetramers. This Klebsiella pneumoniae subsp. pneumoniae (strain ATCC 700721 / MGH 78578) protein is Single-stranded DNA-binding protein 1.